The sequence spans 666 residues: Asperfuranone cluster transcription factor afoA (666 aa).

Residues 16-43 constitute a DNA-binding region (zn(2)-C6 fungal-type); that stretch reads CEECRRRKARCDRVRPKCGFCTENELQC. 2 disordered regions span residues 184 to 206 and 347 to 373; these read LSFDLLNETPPPPSTTTTTSTTR and AGSDRQLSPPSSSPPSSLTLSPSGENA. A compositionally biased stretch (low complexity) spans 353-369; that stretch reads LSPPSSSPPSSLTLSPS.

It localises to the nucleus. Its function is as follows. Transcription factor that regulates the expression of the gene cluster that mediates the biosynthesis of asperfuranone, a probable antitumor agent. The polypeptide is Asperfuranone cluster transcription factor afoA (Emericella nidulans (strain FGSC A4 / ATCC 38163 / CBS 112.46 / NRRL 194 / M139) (Aspergillus nidulans)).